The following is a 438-amino-acid chain: Adenylosuccinate synthetase (438 aa).

Residues 13–19 and 41–43 each bind GTP; these read GDEGKGK and GHT. Catalysis depends on Asp-14, which acts as the Proton acceptor. Residues Asp-14 and Gly-41 each contribute to the Mg(2+) site. Residues 14 to 17, 39 to 42, Thr-130, Arg-144, Gln-225, Thr-240, and Arg-310 each bind IMP; these read DEGK and NAGH. The Proton donor role is filled by His-42. 306 to 312 serves as a coordination point for substrate; it reads ATTGRLR. Residues Arg-312, 338–340, and 421–423 contribute to the GTP site; these read KLD and STG.

It belongs to the adenylosuccinate synthetase family. As to quaternary structure, homodimer. Mg(2+) is required as a cofactor.

The protein localises to the cytoplasm. The enzyme catalyses IMP + L-aspartate + GTP = N(6)-(1,2-dicarboxyethyl)-AMP + GDP + phosphate + 2 H(+). The protein operates within purine metabolism; AMP biosynthesis via de novo pathway; AMP from IMP: step 1/2. Its function is as follows. Plays an important role in the de novo pathway of purine nucleotide biosynthesis. Catalyzes the first committed step in the biosynthesis of AMP from IMP. The sequence is that of Adenylosuccinate synthetase from Vibrio parahaemolyticus serotype O3:K6 (strain RIMD 2210633).